Here is a 421-residue protein sequence, read N- to C-terminus: TITAN-like protein (421 aa).

A C2H2-type 1; degenerate zinc finger spans residues 11–32 (EFCTVCRFHHDQGSRHKYFPRH). A C2H2-type 2; degenerate zinc finger spans residues 70–100 (VWCVFCDEDIVELGSSFACSKAINHFASSDH). Residues 279-306 (ISSSHSTDAGGNVHSGAPPPWLDANDGD) are disordered. Short sequence motifs (nuclear localization signal) lie at residues 328–335 (NRKLNPNR) and 377–384 (TRKESRKE). The disordered stretch occupies residues 376–421 (GTRKESRKEFEKEKRKLVKTESISTESEPVKIQPYISKRARRESGE). The span at 377–389 (TRKESRKEFEKEK) shows a compositional bias: basic and acidic residues.

Also present in cotyledons, hypocotyls, stems, veins of sepals and stigmas, and actively dividing tissues such as shoot apical meristem, root tips and emerging true leaves. Weak expression in petals and anthers, and not detected in mature leaves. In seeds, expressed in both the endosperm and embryo.

The protein resides in the nucleus. Key regulator for endosperm and embryo nuclear divisions. The polypeptide is TITAN-like protein (Arabidopsis thaliana (Mouse-ear cress)).